A 1020-amino-acid polypeptide reads, in one-letter code: Calcium-transporting ATPase 10, plasma membrane-type (1020 aa).

The Cytoplasmic segment spans residues 1–175; sequence MESYLEENFG…FVWEALQDTT (175 aa). Residues 21-32 are interaction with calmodulin; the sequence is ALRRWRKLCGVV. A run of 2 helical transmembrane segments spans residues 176–196 and 199–219; these read LIILAVCAFVSLVVGIAMEGW and GAHDGLGIVASILLVVFVTAT. The Cytoplasmic portion of the chain corresponds to 220-263; sequence SDYRQSLQFKDLDKEKKKIQVQVTRNGFRQRLSIYDLLPGDVVH. A run of 2 helical transmembrane segments spans residues 264-284 and 352-372; these read LAIGDQVPADGLFISGFSLLI and GVATIIGKIGLFFAVITFIVL. Residues 373–400 are Cytoplasmic-facing; the sequence is SQGLISKKYHEGLLLSWSGDDALEMLEH. Residues 401 to 421 traverse the membrane as a helical segment; it reads FAIAVTIVVVAVPEGLPLAVT. Asp-456 functions as the 4-aspartylphosphate intermediate in the catalytic mechanism. Asp-758 and Asp-762 together coordinate Mg(2+). A helical transmembrane segment spans residues 843-863; sequence LTAVQLLWVNMIMDTLGALAL. Residues 864–887 lie on the Cytoplasmic side of the membrane; that stretch reads ATEPPNDDLMKREPVGRTGKFITN. 2 helical membrane-spanning segments follow: residues 888–907 and 924–944; these read VMWRNILGQSFYQFIVMWYL and VVLNTIIFNSFVFCQVFNEIS. The Cytoplasmic portion of the chain corresponds to 945 to 961; it reads SREMEKINVLRGILKNY. 2 helical membrane-spanning segments follow: residues 962–982 and 995–1015; these read VFLGVLTSTVVFQFIMVQFLG and WIASVLLGLIGMPISAIIKLL. Residues 1016–1020 lie on the Cytoplasmic side of the membrane; the sequence is PVGSS.

The protein belongs to the cation transport ATPase (P-type) (TC 3.A.3) family. Type IIB subfamily.

It is found in the membrane. The catalysed reaction is Ca(2+)(in) + ATP + H2O = Ca(2+)(out) + ADP + phosphate + H(+). Its activity is regulated as follows. Activated by calmodulin. This magnesium-dependent enzyme catalyzes the hydrolysis of ATP coupled with the translocation of calcium from the cytosol out of the cell, into the endoplasmic reticulum, or into organelles. This chain is Calcium-transporting ATPase 10, plasma membrane-type, found in Oryza sativa subsp. japonica (Rice).